Reading from the N-terminus, the 239-residue chain is Ribonuclease PH (239 aa).

Phosphate is bound by residues R87 and 125 to 127 (GTR).

Belongs to the RNase PH family. Homohexameric ring arranged as a trimer of dimers.

The enzyme catalyses tRNA(n+1) + phosphate = tRNA(n) + a ribonucleoside 5'-diphosphate. In terms of biological role, phosphorolytic 3'-5' exoribonuclease that plays an important role in tRNA 3'-end maturation. Removes nucleotide residues following the 3'-CCA terminus of tRNAs; can also add nucleotides to the ends of RNA molecules by using nucleoside diphosphates as substrates, but this may not be physiologically important. Probably plays a role in initiation of 16S rRNA degradation (leading to ribosome degradation) during starvation. The protein is Ribonuclease PH of Pseudomonas aeruginosa (strain LESB58).